Here is a 235-residue protein sequence, read N- to C-terminus: Elongation factor Tu, chloroplastic (235 aa).

Residues K1 to Q125 enclose the tr-type G domain. N47 to D50 provides a ligand contact to GTP.

Belongs to the TRAFAC class translation factor GTPase superfamily. Classic translation factor GTPase family. EF-Tu/EF-1A subfamily.

It is found in the plastid. The protein resides in the chloroplast. It carries out the reaction GTP + H2O = GDP + phosphate + H(+). Its function is as follows. GTP hydrolase that promotes the GTP-dependent binding of aminoacyl-tRNA to the A-site of ribosomes during protein biosynthesis. In Gonium pectorale (Green alga), this protein is Elongation factor Tu, chloroplastic (tufA).